The chain runs to 686 residues: X-linked interleukin-1 receptor accessory protein-like 2 (686 aa).

An N-terminal signal peptide occupies residues 1–16 (MKPPFLLALVVCSVVS). Residues 17–354 (TNLKMVSKRN…LLRKKDLIYK (338 aa)) are Extracellular-facing. An Ig-like C2-type 1 domain is found at 18–132 (NLKMVSKRNS…YCMKVSMSLT (115 aa)). A disulfide bond links cysteine 53 and cysteine 116. Residues asparagine 63, asparagine 120, asparagine 136, asparagine 211, and asparagine 328 are each glycosylated (N-linked (GlcNAc...) asparagine). 2 consecutive Ig-like C2-type domains span residues 141 to 232 (CYNS…LKVT) and 239 to 347 (PPKP…VLLR). 2 cysteine pairs are disulfide-bonded: cysteine 162/cysteine 214 and cysteine 265/cysteine 331. A helical transmembrane segment spans residues 355 to 375 (IELAGGLGAIFLLLVLLVVIY). Residues 376 to 686 (KCYNIELMLF…KELSFTSDIW (311 aa)) lie on the Cytoplasmic side of the membrane. The region spanning 400-556 (KEYDAYLSYT…KFWKHLVYEM (157 aa)) is the TIR domain. Glutamate 488 is an active-site residue.

It belongs to the interleukin-1 receptor family. In terms of tissue distribution, detected at low levels in fetal and adult brain, in particular in the frontal lobe, temporal lobe and cerebellum. Detected at very low levels in skin, liver, fetal ovary and in placenta.

Its subcellular location is the membrane. The enzyme catalyses NAD(+) + H2O = ADP-D-ribose + nicotinamide + H(+). In Homo sapiens (Human), this protein is X-linked interleukin-1 receptor accessory protein-like 2 (IL1RAPL2).